The following is a 242-amino-acid chain: Probable transcriptional regulatory protein NGO_1291 (242 aa).

The protein belongs to the TACO1 family.

The protein resides in the cytoplasm. The sequence is that of Probable transcriptional regulatory protein NGO_1291 from Neisseria gonorrhoeae (strain ATCC 700825 / FA 1090).